We begin with the raw amino-acid sequence, 205 residues long: Adenylyl-sulfate kinase (205 aa).

31-38 (GLSGAGKS) contacts ATP. Residue S105 is the Phosphoserine intermediate of the active site.

This sequence belongs to the APS kinase family.

The enzyme catalyses adenosine 5'-phosphosulfate + ATP = 3'-phosphoadenylyl sulfate + ADP + H(+). The protein operates within sulfur metabolism; hydrogen sulfide biosynthesis; sulfite from sulfate: step 2/3. Catalyzes the synthesis of activated sulfate. This Shewanella baltica (strain OS223) protein is Adenylyl-sulfate kinase.